Reading from the N-terminus, the 144-residue chain is Glutaredoxin-C6 (144 aa).

A Glutaredoxin domain is found at 39 to 143 (EAKIRRLISE…PKLVQVGALW (105 aa)). Cys-59 and Cys-62 are disulfide-bonded.

The protein belongs to the glutaredoxin family. CC-type subfamily.

It localises to the cytoplasm. Has a glutathione-disulfide oxidoreductase activity in the presence of NADPH and glutathione reductase. Reduces low molecular weight disulfides and proteins. This Arabidopsis thaliana (Mouse-ear cress) protein is Glutaredoxin-C6 (GRXC6).